A 698-amino-acid chain; its full sequence is Elongation factor G (698 aa).

One can recognise a tr-type G domain in the interval 10 to 285 (AGTRNIGIMA…AVVDFLPNPL (276 aa)). GTP is bound by residues 19 to 26 (AHIDAGKT), 83 to 87 (DTPGH), and 137 to 140 (NKMD).

The protein belongs to the TRAFAC class translation factor GTPase superfamily. Classic translation factor GTPase family. EF-G/EF-2 subfamily.

It is found in the cytoplasm. In terms of biological role, catalyzes the GTP-dependent ribosomal translocation step during translation elongation. During this step, the ribosome changes from the pre-translocational (PRE) to the post-translocational (POST) state as the newly formed A-site-bound peptidyl-tRNA and P-site-bound deacylated tRNA move to the P and E sites, respectively. Catalyzes the coordinated movement of the two tRNA molecules, the mRNA and conformational changes in the ribosome. This chain is Elongation factor G, found in Frankia casuarinae (strain DSM 45818 / CECT 9043 / HFP020203 / CcI3).